Here is a 331-residue protein sequence, read N- to C-terminus: Protoheme IX farnesyltransferase (331 aa).

8 helical membrane-spanning segments follow: residues 63-83 (LACT…LNCL), 109-129 (SVFI…VSGV), 132-152 (LAAG…TAFL), 160-180 (IVFG…AAAG), 188-208 (WLFS…AILL), 215-235 (VGIP…AISV), 241-261 (VFLS…YGIL), and 294-314 (ILYM…VSIV).

The protein belongs to the UbiA prenyltransferase family. Protoheme IX farnesyltransferase subfamily.

The protein resides in the cell inner membrane. It catalyses the reaction heme b + (2E,6E)-farnesyl diphosphate + H2O = Fe(II)-heme o + diphosphate. It participates in porphyrin-containing compound metabolism; heme O biosynthesis; heme O from protoheme: step 1/1. Its function is as follows. Converts heme B (protoheme IX) to heme O by substitution of the vinyl group on carbon 2 of heme B porphyrin ring with a hydroxyethyl farnesyl side group. This Prochlorococcus marinus (strain NATL1A) protein is Protoheme IX farnesyltransferase.